We begin with the raw amino-acid sequence, 619 residues long: Mitochondrial Rho GTPase 1 (619 aa).

The Cytoplasmic portion of the chain corresponds to 1-593 (MKKDVRILLV…TQADLKSSTF (593 aa)). In terms of domain architecture, Miro 1 spans 2 to 168 (KKDVRILLVG…FYYAQKAVLH (167 aa)). Residues Arg14, Gly16, Lys17, Thr18, and Ser19 each coordinate GTP. Thr18 is a binding site for Mg(2+). Mg(2+) contacts are provided by Pro35 and Asp57. GTP contacts are provided by Ser59, Asn118, Lys119, Asp121, Ala149, and Lys150. EF-hand domains follow at residues 184-219 (ACIK…CFNT) and 304-339 (HAYL…FPYM). Ca(2+)-binding residues include Asp197, Asp199, Asp201, Thr203, Glu208, Asp317, Asp319, Asp321, Ala323, and Glu328. Residues 417–580 (RNVFRCNVVG…FVKLTTMAMY (164 aa)) enclose the Miro 2 domain. GTP-binding residues include Gly429, Cys430, Gly431, Lys432, Ser433, Gly434, Arg448, Lys529, Asp531, Thr559, and Cys560. Gly429 lines the Mg(2+) pocket. A helical; Anchor for type IV membrane protein membrane pass occupies residues 594–616 (WLRASFGATVFAFLGFAMYKALI). At 617 to 619 (KQR) the chain is on the mitochondrial intermembrane side.

The protein belongs to the mitochondrial Rho GTPase family. Homodimer.

The protein resides in the mitochondrion outer membrane. It carries out the reaction GTP + H2O = GDP + phosphate + H(+). The catalysed reaction is ATP + H2O = ADP + phosphate + H(+). The enzyme catalyses UTP + H2O = UDP + phosphate + H(+). Atypical mitochondrial nucleoside-triphosphatase (NTPase) involved in mitochondrial trafficking. Probably involved in control of anterograde transport of mitochondria and their subcellular distribution. Can hydrolyze GTP, ATP and UTP. The polypeptide is Mitochondrial Rho GTPase 1 (RHOT1) (Gallus gallus (Chicken)).